Here is a 343-residue protein sequence, read N- to C-terminus: Mediator of RNA polymerase II transcription subunit 2 (343 aa).

2 disordered regions span residues 105-141 and 252-277; these read KQQQ…AQQL and STNE…ISSN. Basic and acidic residues predominate over residues 107–132; sequence QQEEEQRRKHQAELEKNKRQQEHDAA. Polar residues predominate over residues 252-264; sequence STNEASTNNRNND.

Belongs to the Mediator complex subunit 2 family. Component of the Mediator complex.

It is found in the nucleus. Component of the Mediator complex, a coactivator involved in the regulated transcription of nearly all RNA polymerase II-dependent genes. Mediator functions as a bridge to convey information from gene-specific regulatory proteins to the basal RNA polymerase II transcription machinery. Mediator is recruited to promoters by direct interactions with regulatory proteins and serves as a scaffold for the assembly of a functional preinitiation complex with RNA polymerase II and the general transcription factors. This chain is Mediator of RNA polymerase II transcription subunit 2 (MED2), found in Eremothecium gossypii (strain ATCC 10895 / CBS 109.51 / FGSC 9923 / NRRL Y-1056) (Yeast).